Here is a 324-residue protein sequence, read N- to C-terminus: Phosphate transport system permease protein PstC 2 (324 aa).

The next 6 membrane-spanning stretches (helical) occupy residues 30–50 (ASAA…FLLV), 90–110 (LSSI…AVFL), 125–145 (MVDL…IFVL), 174–194 (AGGG…LPIV), 237–257 (VAAS…VLVI), and 290–310 (PLPT…TFLV). The ABC transmembrane type-1 domain maps to 85–314 (FMVTALSSIT…VLTFLVNAAA (230 aa)).

Belongs to the binding-protein-dependent transport system permease family. CysTW subfamily.

The protein resides in the cell membrane. Functionally, part of the binding-protein-dependent transport system for phosphate; probably responsible for the translocation of the substrate across the membrane. The chain is Phosphate transport system permease protein PstC 2 (pstC2) from Mycobacterium bovis (strain ATCC BAA-935 / AF2122/97).